The primary structure comprises 252 residues: ATP synthase subunit a (252 aa).

6 helical membrane-spanning segments follow: residues 29-49, 87-107, 117-137, 146-166, 196-216, and 219-239; these read FTNVSFFIVATVVVSSVFLFI, FFPLVFSLFTFILVANFIGLF, IMITFSLAMLVIFTVISYGFY, LFVPSGVPVLILPLVTMIEVI, FIVSMIGIGIMGVGGSILPLI, and VAITALEFLVAFLQAYVFTVL.

The protein belongs to the ATPase A chain family. In terms of assembly, F-type ATPases have 2 components, CF(1) - the catalytic core - and CF(0) - the membrane proton channel. CF(1) has five subunits: alpha(3), beta(3), gamma(1), delta(1), epsilon(1). CF(0) has three main subunits: a(1), b(2) and c(9-12). The alpha and beta chains form an alternating ring which encloses part of the gamma chain. CF(1) is attached to CF(0) by a central stalk formed by the gamma and epsilon chains, while a peripheral stalk is formed by the delta and b chains.

The protein localises to the cell inner membrane. Its function is as follows. Key component of the proton channel; it plays a direct role in the translocation of protons across the membrane. This chain is ATP synthase subunit a, found in Bartonella henselae (strain ATCC 49882 / DSM 28221 / CCUG 30454 / Houston 1) (Rochalimaea henselae).